A 423-amino-acid polypeptide reads, in one-letter code: Glucose-1-phosphate adenylyltransferase (423 aa).

Alpha-D-glucose 1-phosphate-binding positions include Tyr108, Gly173, 188–189 (EK), and Ser207.

It belongs to the bacterial/plant glucose-1-phosphate adenylyltransferase family. Homotetramer.

The catalysed reaction is alpha-D-glucose 1-phosphate + ATP + H(+) = ADP-alpha-D-glucose + diphosphate. It functions in the pathway glycan biosynthesis; glycogen biosynthesis. Its function is as follows. Involved in the biosynthesis of ADP-glucose, a building block required for the elongation reactions to produce glycogen. Catalyzes the reaction between ATP and alpha-D-glucose 1-phosphate (G1P) to produce pyrophosphate and ADP-Glc. The polypeptide is Glucose-1-phosphate adenylyltransferase (Francisella tularensis subsp. mediasiatica (strain FSC147)).